A 297-amino-acid polypeptide reads, in one-letter code: 4-hydroxy-tetrahydrodipicolinate synthase (297 aa).

Residue T55 coordinates pyruvate. The active-site Proton donor/acceptor is the Y144. The active-site Schiff-base intermediate with substrate is the K172. Residue I213 coordinates pyruvate.

This sequence belongs to the DapA family. As to quaternary structure, homotetramer; dimer of dimers.

Its subcellular location is the cytoplasm. It catalyses the reaction L-aspartate 4-semialdehyde + pyruvate = (2S,4S)-4-hydroxy-2,3,4,5-tetrahydrodipicolinate + H2O + H(+). Its pathway is amino-acid biosynthesis; L-lysine biosynthesis via DAP pathway; (S)-tetrahydrodipicolinate from L-aspartate: step 3/4. In terms of biological role, catalyzes the condensation of (S)-aspartate-beta-semialdehyde [(S)-ASA] and pyruvate to 4-hydroxy-tetrahydrodipicolinate (HTPA). This chain is 4-hydroxy-tetrahydrodipicolinate synthase, found in Lactococcus lactis subsp. cremoris (strain SK11).